Here is a 277-residue protein sequence, read N- to C-terminus: Ribosomal RNA small subunit methyltransferase A (277 aa).

6 residues coordinate S-adenosyl-L-methionine: Asn18, Leu20, Gly45, Glu66, Asp89, and Asn110.

This sequence belongs to the class I-like SAM-binding methyltransferase superfamily. rRNA adenine N(6)-methyltransferase family. RsmA subfamily.

It localises to the cytoplasm. It catalyses the reaction adenosine(1518)/adenosine(1519) in 16S rRNA + 4 S-adenosyl-L-methionine = N(6)-dimethyladenosine(1518)/N(6)-dimethyladenosine(1519) in 16S rRNA + 4 S-adenosyl-L-homocysteine + 4 H(+). Its function is as follows. Specifically dimethylates two adjacent adenosines (A1518 and A1519) in the loop of a conserved hairpin near the 3'-end of 16S rRNA in the 30S particle. May play a critical role in biogenesis of 30S subunits. This is Ribosomal RNA small subunit methyltransferase A from Cupriavidus taiwanensis (strain DSM 17343 / BCRC 17206 / CCUG 44338 / CIP 107171 / LMG 19424 / R1) (Ralstonia taiwanensis (strain LMG 19424)).